Consider the following 789-residue polypeptide: Glycerol-3-phosphate acyltransferase (789 aa).

Positions 275–280 match the HXXXXD motif motif; that stretch reads SHRSYI.

It belongs to the GPAT/DAPAT family.

The protein resides in the cell membrane. It catalyses the reaction sn-glycerol 3-phosphate + an acyl-CoA = a 1-acyl-sn-glycero-3-phosphate + CoA. It functions in the pathway phospholipid metabolism; CDP-diacylglycerol biosynthesis; CDP-diacylglycerol from sn-glycerol 3-phosphate: step 1/3. The chain is Glycerol-3-phosphate acyltransferase from Mycobacterium bovis (strain BCG / Pasteur 1173P2).